The primary structure comprises 76 residues: MRSRGFYEWLMTQRKPENADEVQEFANAAFFDSEFPKQSQNFDEISKYLEENAPYLMSMEVFDEAWRRFLASEEEL.

This sequence belongs to the UPF0346 family.

The sequence is that of UPF0346 protein OEOE_1017 from Oenococcus oeni (strain ATCC BAA-331 / PSU-1).